The sequence spans 611 residues: Elongation factor 4 (611 aa).

The tr-type G domain occupies 12–194 (SRIRNFSIIA…QIVEKVPAPA (183 aa)). GTP contacts are provided by residues 24–29 (DHGKST) and 141–144 (NKID).

The protein belongs to the TRAFAC class translation factor GTPase superfamily. Classic translation factor GTPase family. LepA subfamily.

It is found in the cell membrane. It carries out the reaction GTP + H2O = GDP + phosphate + H(+). Required for accurate and efficient protein synthesis under certain stress conditions. May act as a fidelity factor of the translation reaction, by catalyzing a one-codon backward translocation of tRNAs on improperly translocated ribosomes. Back-translocation proceeds from a post-translocation (POST) complex to a pre-translocation (PRE) complex, thus giving elongation factor G a second chance to translocate the tRNAs correctly. Binds to ribosomes in a GTP-dependent manner. The sequence is that of Elongation factor 4 from Bacillus velezensis (strain DSM 23117 / BGSC 10A6 / LMG 26770 / FZB42) (Bacillus amyloliquefaciens subsp. plantarum).